We begin with the raw amino-acid sequence, 270 residues long: Formamidopyrimidine-DNA glycosylase (270 aa).

The active-site Schiff-base intermediate with DNA is P2. Catalysis depends on E3, which acts as the Proton donor. The Proton donor; for beta-elimination activity role is filled by K58. H91, R109, and R151 together coordinate DNA. The FPG-type zinc-finger motif lies at L236 to Q270. The active-site Proton donor; for delta-elimination activity is R260.

Belongs to the FPG family. Monomer. It depends on Zn(2+) as a cofactor.

The catalysed reaction is Hydrolysis of DNA containing ring-opened 7-methylguanine residues, releasing 2,6-diamino-4-hydroxy-5-(N-methyl)formamidopyrimidine.. The enzyme catalyses 2'-deoxyribonucleotide-(2'-deoxyribose 5'-phosphate)-2'-deoxyribonucleotide-DNA = a 3'-end 2'-deoxyribonucleotide-(2,3-dehydro-2,3-deoxyribose 5'-phosphate)-DNA + a 5'-end 5'-phospho-2'-deoxyribonucleoside-DNA + H(+). Its function is as follows. Involved in base excision repair of DNA damaged by oxidation or by mutagenic agents. Acts as a DNA glycosylase that recognizes and removes damaged bases. Has a preference for oxidized purines, such as 7,8-dihydro-8-oxoguanine (8-oxoG). Has AP (apurinic/apyrimidinic) lyase activity and introduces nicks in the DNA strand. Cleaves the DNA backbone by beta-delta elimination to generate a single-strand break at the site of the removed base with both 3'- and 5'-phosphates. The chain is Formamidopyrimidine-DNA glycosylase from Cellvibrio japonicus (strain Ueda107) (Pseudomonas fluorescens subsp. cellulosa).